The chain runs to 437 residues: Sulfite reductase, dissimilatory-type subunit alpha (437 aa).

Residues cysteine 177, cysteine 183, cysteine 221, cysteine 225, cysteine 284, cysteine 303, cysteine 306, and cysteine 309 each contribute to the [4Fe-4S] cluster site. In terms of domain architecture, 4Fe-4S ferredoxin-type spans 294-322 (SKLSIDNKECVRCMHCINTMPRALHIGDE).

In terms of assembly, heterohexamer of two alpha, two beta and two gamma subunits.

Its function is as follows. Part of the complex that catalyzes the reduction of sulfite to sulfide. The alpha and beta subunits may have arisen by gene duplication. They both bind 2 iron-sulfur clusters, but the alpha subunit seems to be catalytically inactive, due to substitutions along the putative substrate access channel, and because it binds sirohydrochlorin (the dematallated form of siroheme) instead of siroheme. This chain is Sulfite reductase, dissimilatory-type subunit alpha (dsvA), found in Nitratidesulfovibrio vulgaris (strain ATCC 29579 / DSM 644 / CCUG 34227 / NCIMB 8303 / VKM B-1760 / Hildenborough) (Desulfovibrio vulgaris).